The chain runs to 73 residues: DNA-directed RNA polymerase subunit epsilon (73 aa).

The protein belongs to the RNA polymerase subunit epsilon family. In terms of assembly, RNAP is composed of a core of 2 alpha, a beta and a beta' subunit. The core is associated with a delta subunit, and at least one of epsilon or omega. When a sigma factor is associated with the core the holoenzyme is formed, which can initiate transcription.

It carries out the reaction RNA(n) + a ribonucleoside 5'-triphosphate = RNA(n+1) + diphosphate. A non-essential component of RNA polymerase (RNAP). The chain is DNA-directed RNA polymerase subunit epsilon from Lactobacillus helveticus (strain DPC 4571).